A 143-amino-acid polypeptide reads, in one-letter code: Large-conductance mechanosensitive channel (143 aa).

2 helical membrane passes run 19–39 and 81–101; these read VGVIIGAAFGGIVSSLVADVI and GSFLTLTLNFLIVAFVLFLVV.

The protein belongs to the MscL family. Homopentamer.

Its subcellular location is the cell inner membrane. Channel that opens in response to stretch forces in the membrane lipid bilayer. May participate in the regulation of osmotic pressure changes within the cell. The chain is Large-conductance mechanosensitive channel from Rhodopseudomonas palustris (strain HaA2).